The following is a 334-amino-acid chain: Ornithine carbamoyltransferase (334 aa).

Carbamoyl phosphate is bound by residues 57–60 (STRT), Q84, R108, and 135–138 (HPTQ). L-ornithine-binding positions include N169, D233, and 237–238 (SM). Residues 275–276 (CL) and R320 each bind carbamoyl phosphate.

This sequence belongs to the aspartate/ornithine carbamoyltransferase superfamily. OTCase family.

It is found in the cytoplasm. The catalysed reaction is carbamoyl phosphate + L-ornithine = L-citrulline + phosphate + H(+). It participates in amino-acid biosynthesis; L-arginine biosynthesis; L-arginine from L-ornithine and carbamoyl phosphate: step 1/3. In terms of biological role, reversibly catalyzes the transfer of the carbamoyl group from carbamoyl phosphate (CP) to the N(epsilon) atom of ornithine (ORN) to produce L-citrulline. The protein is Ornithine carbamoyltransferase of Vibrio parahaemolyticus serotype O3:K6 (strain RIMD 2210633).